The chain runs to 188 residues: MRVLGVDPGLTRRGIGVVEGVAGRPLTMIGVGVVRTPADADLGHRLVAVEQGIEQWLDEHRPEFVAVERVFSQHNVRTVMGTAQASAVAILCASRRGIPVALHTPSEVKAAVTGSGRADKAQVGAMVTRLLRLAAPPKPADAADALALAICHIWRAPAQNRLQQAVALHTAQGPRRPHKLHPSKGRPA.

Catalysis depends on residues D7, E68, and D141. Mg(2+) contacts are provided by D7, E68, and D141.

Belongs to the RuvC family. As to quaternary structure, homodimer which binds Holliday junction (HJ) DNA. The HJ becomes 2-fold symmetrical on binding to RuvC with unstacked arms; it has a different conformation from HJ DNA in complex with RuvA. In the full resolvosome a probable DNA-RuvA(4)-RuvB(12)-RuvC(2) complex forms which resolves the HJ. It depends on Mg(2+) as a cofactor.

It localises to the cytoplasm. The catalysed reaction is Endonucleolytic cleavage at a junction such as a reciprocal single-stranded crossover between two homologous DNA duplexes (Holliday junction).. Functionally, the RuvA-RuvB-RuvC complex processes Holliday junction (HJ) DNA during genetic recombination and DNA repair. Endonuclease that resolves HJ intermediates. Cleaves cruciform DNA by making single-stranded nicks across the HJ at symmetrical positions within the homologous arms, yielding a 5'-phosphate and a 3'-hydroxyl group; requires a central core of homology in the junction. The consensus cleavage sequence is 5'-(A/T)TT(C/G)-3'. Cleavage occurs on the 3'-side of the TT dinucleotide at the point of strand exchange. HJ branch migration catalyzed by RuvA-RuvB allows RuvC to scan DNA until it finds its consensus sequence, where it cleaves and resolves the cruciform DNA. This Streptomyces coelicolor (strain ATCC BAA-471 / A3(2) / M145) protein is Crossover junction endodeoxyribonuclease RuvC.